The following is a 71-amino-acid chain: UPF0346 protein BCB4264_A2283 (71 aa).

It belongs to the UPF0346 family.

The protein is UPF0346 protein BCB4264_A2283 of Bacillus cereus (strain B4264).